The following is a 120-amino-acid chain: Protein GP96 (120 aa).

Belongs to the herpesviridae UL96 family.

In Cavia porcellus (Guinea pig), this protein is Protein GP96.